The sequence spans 339 residues: Ribosome biogenesis protein BRX1 homolog (339 aa).

The disordered stretch occupies residues 1–34; the sequence is MSAYKRKRGSLPEVATNTKKAKKQLAGSEQEATA. The region spanning 53–242 is the Brix domain; it reads ERVLIFSSRG…LIKIFKGSFG (190 aa). The tract at residues 304 to 339 is disordered; sequence AEEKPQVIETEPPAPKPKMKRKDKQFKRQRMAKKRM. The span at 320–339 shows a compositional bias: basic residues; the sequence is PKMKRKDKQFKRQRMAKKRM.

It belongs to the BRX1 family. Ubiquitous.

The protein localises to the nucleus. Its subcellular location is the nucleolus. Functionally, required for biogenesis of the 60S ribosomal subunit. The sequence is that of Ribosome biogenesis protein BRX1 homolog (brix1) from Xenopus laevis (African clawed frog).